The following is a 155-amino-acid chain: Deoxyuridine 5'-triphosphate nucleotidohydrolase (155 aa).

Substrate contacts are provided by residues Arg-72–Gly-74, Asn-85, Thr-89–Asp-91, and Lys-99.

Belongs to the dUTPase family. Mg(2+) is required as a cofactor.

It catalyses the reaction dUTP + H2O = dUMP + diphosphate + H(+). It participates in pyrimidine metabolism; dUMP biosynthesis; dUMP from dCTP (dUTP route): step 2/2. Its function is as follows. This enzyme is involved in nucleotide metabolism: it produces dUMP, the immediate precursor of thymidine nucleotides and it decreases the intracellular concentration of dUTP so that uracil cannot be incorporated into DNA. The sequence is that of Deoxyuridine 5'-triphosphate nucleotidohydrolase from Parvibaculum lavamentivorans (strain DS-1 / DSM 13023 / NCIMB 13966).